We begin with the raw amino-acid sequence, 346 residues long: Nucleoplasmin-like protein ANO39 (346 aa).

The residue at position 2 (serine 2) is an N-acetylserine. N-linked (GlcNAc...) asparagine glycosylation occurs at asparagine 85. Residues 123–141 (DEEELEEDDEEEEEEDEVE) show a composition bias toward acidic residues. A disordered region spans residues 123–285 (DEEELEEDDE…KAKAKTDTKL (163 aa)). At serine 145 the chain carries Phosphoserine; by CDC2. Positions 171 to 180 (AKLDKDADKK) are enriched in basic and acidic residues. A compositionally biased stretch (acidic residues) spans 181-247 (EDDDEEEDDE…EEEEDEDEES (67 aa)). Residue asparagine 264 is glycosylated (N-linked (GlcNAc...) asparagine). The segment covering 271-285 (GDNKPKAKAKTDTKL) has biased composition (basic and acidic residues).

It belongs to the nucleoplasmin family. In terms of processing, phosphorylation occurs in oocytes during the progression of the first meiotic M phase. No phosphorylation is observed in immature oocytes. As to expression, expressed specifically in the oocytes of the ovaries.

Its subcellular location is the nucleus. The protein resides in the nucleolus. It is found in the cytoplasm. Binds double-stranded RNA and both single-stranded and double-stranded DNA. The polypeptide is Nucleoplasmin-like protein ANO39 (Patiria pectinifera (Starfish)).